Reading from the N-terminus, the 512-residue chain is GMP synthase [glutamine-hydrolyzing] (512 aa).

The Glutamine amidotransferase type-1 domain occupies 9–198 (GVLVVDFGGQ…WLSLVGAPRT (190 aa)). Residue C87 is the Nucleophile of the active site. Catalysis depends on residues H173 and E175. In terms of domain architecture, GMPS ATP-PPase spans 199 to 387 (WRPGDMVSEL…LGVPRELIWK (189 aa)). 226 to 232 (SGGVDST) lines the ATP pocket.

The enzyme catalyses XMP + L-glutamine + ATP + H2O = GMP + L-glutamate + AMP + diphosphate + 2 H(+). It participates in purine metabolism; GMP biosynthesis; GMP from XMP (L-Gln route): step 1/1. Functionally, catalyzes the synthesis of GMP from XMP. This chain is GMP synthase [glutamine-hydrolyzing] (guaA), found in Aeropyrum pernix (strain ATCC 700893 / DSM 11879 / JCM 9820 / NBRC 100138 / K1).